The sequence spans 457 residues: Aromatic amino acid transport protein AroP (457 aa).

The Cytoplasmic portion of the chain corresponds to 1 to 18 (MMEGQQHGEQLKRGLKNR). Residues 19–39 (HIQLIALGGAIGTGLFLGSAS) traverse the membrane as a helical segment. Residues 40–42 (VIQ) lie on the Periplasmic side of the membrane. Residues 43–63 (SAGPGIILGYAIAGFIAFLIM) traverse the membrane as a helical segment. The Cytoplasmic portion of the chain corresponds to 64–98 (RQLGEMVVEEPVAGSFSHFAYKYWGSFAGFASGWN). Residues 99–119 (YWVLYVLVAMAELTAVGKYIQ) traverse the membrane as a helical segment. Residues 120-124 (FWYPE) are Periplasmic-facing. A helical transmembrane segment spans residues 125-145 (IPTWVSAAVFFVVINAINLTN). Residues 146 to 147 (VK) lie on the Cytoplasmic side of the membrane. A helical transmembrane segment spans residues 148-168 (VFGEMEFWFAIIKVIAVVAMI). Topologically, residues 169-192 (IFGGWLLFSGNGGPQATVSNLWDQ) are periplasmic. The chain crosses the membrane as a helical span at residues 193 to 213 (GGFLPHGFTGLVMMMAIIMFS). Residues 214-239 (FGGLELVGITAAEADNPEQSIPKATN) are Cytoplasmic-facing. The chain crosses the membrane as a helical span at residues 240–260 (QVIYRILIFYIGSLAVLLSLM). Over 261-279 (PWTRVTADTSPFVLIFHEL) the chain is Periplasmic. Residues 280–300 (GDTFVANALNIVVLTAALSVY) traverse the membrane as a helical segment. Topologically, residues 301–330 (NSCVYCNSRMLFGLAQQGNAPKALASVDKR) are cytoplasmic. Residues 331-351 (GVPVNTILVSALVTALCVLIN) form a helical membrane-spanning segment. Topologically, residues 352–359 (YLAPESAF) are periplasmic. The chain crosses the membrane as a helical span at residues 360–380 (GLLMALVVSALVINWAMISLA). Over 381–402 (HMKFRRAKQEQGVVTRFPALLY) the chain is Cytoplasmic. A helical membrane pass occupies residues 403–423 (PLGNWICLLFMAAVLVIMLMT). Residues 424–426 (PGM) are Periplasmic-facing. Residues 427 to 447 (AISVYLIPVWLIVLGIGYLFK) traverse the membrane as a helical segment. At 448–457 (EKTAKAVKAH) the chain is on the cytoplasmic side.

The protein belongs to the amino acid-polyamine-organocation (APC) superfamily. Amino acid transporter (AAT) (TC 2.A.3.1) family.

The protein resides in the cell inner membrane. The catalysed reaction is L-phenylalanine(in) + H(+)(in) = L-phenylalanine(out) + H(+)(out). It catalyses the reaction L-tryptophan(in) + H(+)(in) = L-tryptophan(out) + H(+)(out). It carries out the reaction L-tyrosine(in) + H(+)(in) = L-tyrosine(out) + H(+)(out). Strong, mutual inhibition of uptake by tyrosine, phenylalanine, and tryptophan. Transport is also inhibited by the aromatic analogs p-fluorophenylalanine, beta-2-thienylalanine and 5-methyltryptophan. Its function is as follows. Permease that is involved in the active transport across the cytoplasmic membrane of all three aromatic amino acids, phenylalanine, tyrosine and tryptophan. The chain is Aromatic amino acid transport protein AroP from Escherichia coli (strain K12).